A 499-amino-acid chain; its full sequence is Probable cytosol aminopeptidase (499 aa).

2 residues coordinate Mn(2+): Lys-269 and Asp-274. Lys-281 is an active-site residue. Residues Asp-292, Asp-351, and Glu-353 each contribute to the Mn(2+) site. Arg-355 is an active-site residue.

This sequence belongs to the peptidase M17 family. The cofactor is Mn(2+).

The protein localises to the cytoplasm. The catalysed reaction is Release of an N-terminal amino acid, Xaa-|-Yaa-, in which Xaa is preferably Leu, but may be other amino acids including Pro although not Arg or Lys, and Yaa may be Pro. Amino acid amides and methyl esters are also readily hydrolyzed, but rates on arylamides are exceedingly low.. It carries out the reaction Release of an N-terminal amino acid, preferentially leucine, but not glutamic or aspartic acids.. Its function is as follows. Presumably involved in the processing and regular turnover of intracellular proteins. Catalyzes the removal of unsubstituted N-terminal amino acids from various peptides. This Actinobacillus pleuropneumoniae serotype 7 (strain AP76) protein is Probable cytosol aminopeptidase.